Here is a 464-residue protein sequence, read N- to C-terminus: Juvenile hormone epoxide hydrolase 1 (464 aa).

The chain crosses the membrane as a helical span at residues 7 to 27; it reads MLIFAAIAGIAVLYYQITKEL. D224 serves as the catalytic Nucleophile. The active-site Proton donor is Y370. Catalysis depends on H427, which acts as the Proton acceptor.

The protein belongs to the peptidase S33 family. In terms of tissue distribution, developing oocytes, fat body and midgut epithelium of adults.

It is found in the microsome membrane. Its subcellular location is the endoplasmic reticulum membrane. It carries out the reaction cis-stilbene oxide + H2O = (1R,2R)-hydrobenzoin. The catalysed reaction is 1-(4-methoxyphenyl)-N-methyl-N-[(3-methyloxetan-3-yl)methyl]methanamine + H2O = 2-{[(4-methoxybenzyl)(methyl)amino]methyl}-2-methylpropane-1,3-diol. In terms of biological role, catalyzes juvenile hormone hydrolysis. The protein is Juvenile hormone epoxide hydrolase 1 of Ctenocephalides felis (Cat flea).